The chain runs to 296 residues: 4-diphosphocytidyl-2-C-methyl-D-erythritol kinase (296 aa).

K18 is an active-site residue. 103–113 provides a ligand contact to ATP; the sequence is PHGAGLGGGSS. D146 is a catalytic residue.

This sequence belongs to the GHMP kinase family. IspE subfamily.

It carries out the reaction 4-CDP-2-C-methyl-D-erythritol + ATP = 4-CDP-2-C-methyl-D-erythritol 2-phosphate + ADP + H(+). The protein operates within isoprenoid biosynthesis; isopentenyl diphosphate biosynthesis via DXP pathway; isopentenyl diphosphate from 1-deoxy-D-xylulose 5-phosphate: step 3/6. Functionally, catalyzes the phosphorylation of the position 2 hydroxy group of 4-diphosphocytidyl-2C-methyl-D-erythritol. In Solidesulfovibrio magneticus (strain ATCC 700980 / DSM 13731 / RS-1) (Desulfovibrio magneticus), this protein is 4-diphosphocytidyl-2-C-methyl-D-erythritol kinase.